Consider the following 531-residue polypeptide: T-complex protein 1 subunit zeta (531 aa).

A2 bears the N-acetylalanine mark. The residue at position 5 (K5) is an N6-acetyllysine. G39 contributes to the ADP binding site. G39 is a binding site for ATP. D90 provides a ligand contact to Mg(2+). ADP is bound by residues G91, T92, T93, S94, T158, and K159. The ATP site is built by G91, T92, and T93. K199 is modified (N6-acetyllysine). S205 bears the Phosphoserine mark. A Glycyl lysine isopeptide (Lys-Gly) (interchain with G-Cter in SUMO2) cross-link involves residue K251. N6-acetyllysine is present on residues K287, K365, K377, and K388. Position 411 (A411) interacts with ADP. 4 residues coordinate ATP: A411, G412, D496, and K501. D496 contacts ADP.

This sequence belongs to the TCP-1 chaperonin family. As to quaternary structure, component of the chaperonin-containing T-complex (TRiC), a hexadecamer composed of two identical back-to-back stacked rings enclosing a protein folding chamber. Each ring is made up of eight different subunits: TCP1/CCT1, CCT2, CCT3, CCT4, CCT5, CCT6A/CCT6, CCT7, CCT8. Interacts with PACRG.

It is found in the cytoplasm. It catalyses the reaction ATP + H2O = ADP + phosphate + H(+). In terms of biological role, component of the chaperonin-containing T-complex (TRiC), a molecular chaperone complex that assists the folding of actin, tubulin and other proteins upon ATP hydrolysis. The TRiC complex mediates the folding of WRAP53/TCAB1, thereby regulating telomere maintenance. The chain is T-complex protein 1 subunit zeta (CCT6A) from Bos taurus (Bovine).